Reading from the N-terminus, the 355-residue chain is Phosphoribosylformylglycinamidine cyclo-ligase (355 aa).

This sequence belongs to the AIR synthase family.

The protein resides in the cytoplasm. The catalysed reaction is 2-formamido-N(1)-(5-O-phospho-beta-D-ribosyl)acetamidine + ATP = 5-amino-1-(5-phospho-beta-D-ribosyl)imidazole + ADP + phosphate + H(+). The protein operates within purine metabolism; IMP biosynthesis via de novo pathway; 5-amino-1-(5-phospho-D-ribosyl)imidazole from N(2)-formyl-N(1)-(5-phospho-D-ribosyl)glycinamide: step 2/2. The polypeptide is Phosphoribosylformylglycinamidine cyclo-ligase (Methylobacterium sp. (strain 4-46)).